A 440-amino-acid polypeptide reads, in one-letter code: Diels-Alderase mycB (440 aa).

A signal peptide spans 1–18 (MGYLVKLACGLLLPLATA). N-linked (GlcNAc...) asparagine glycosylation is found at asparagine 80, asparagine 155, and asparagine 332.

This sequence belongs to the Diels-Alderase family.

It carries out the reaction (5S)-5-(2-methylpropyl)-3-[(2E,6R,8E,10E,12E)-6,8,10,12-tetramethyltetradeca-2,8,10,12-tetraenoyl]-2,5-dihydro-1H-pyrrol-2-one = (5S)-3-[(1S,2R,4aR,6R,8aS)-2-(but-2-en-2-yl)-3,4a,6-trimethyl-1,2,4a,5,6,7,8,8a-octahydronaphthalene-1-carbonyl]-5-(2-methylpropyl)-2,5-dihydro-1H-pyrrol-2-one. The catalysed reaction is (5Z)-5-(2-methylpropylidene)-3-[(2E,6R,8E,10E,12E)-6,8,10,12-tetramethyltetradeca-2,8,10,12-tetraenoyl]-2,5-dihydro-1H-pyrrol-2-one = myceliothermophin E. It participates in mycotoxin biosynthesis. In terms of biological role, diels-Alderase; part of the gene cluster that mediates the biosynthesis of myceliothermophins, mycotoxins that contain a trans-fused decalin ring system connected to a conjugated 3-pyrrolin-2-one moiety and that have potential anti-tumor properties. The polyketide synthase module (PKS) of the PKS-NRPS mycA is responsible for the synthesis of the octaketide backbone. The downstream nonribosomal peptide synthetase (NRPS) module then amidates the carboxyl end of the octaketide with a leucine. A reductase-like domain (R) at the C-terminus catalyzes the reductive release of the polyketide-amino acid intermediate. Because mycA lacks a designated enoylreductase (ER) domain, the required activity is provided the enoyl reductase mycC. Following mycA-catalyzed construction and release of aminoacyl polyketide aldehyde, Knoevenagel condensation yields the expected ketone. This C18 keto acyclic precursor is the substrate of the Diels-Alderase mycB, that catalyzes the Diels-Alder cycloaddition to produce myceliothermophin E. A yet unknown oxygenase involved in the production of myceliothermophin A, via substitution with a hydroxyl group at the C21, has still to be identified. The sequence is that of Diels-Alderase mycB from Thermothelomyces thermophilus (strain ATCC 42464 / BCRC 31852 / DSM 1799) (Sporotrichum thermophile).